The primary structure comprises 621 residues: Chaperone protein HscA homolog (621 aa).

Belongs to the heat shock protein 70 family.

Functionally, chaperone involved in the maturation of iron-sulfur cluster-containing proteins. Has a low intrinsic ATPase activity which is markedly stimulated by HscB. This Cupriavidus pinatubonensis (strain JMP 134 / LMG 1197) (Cupriavidus necator (strain JMP 134)) protein is Chaperone protein HscA homolog.